Here is a 147-residue protein sequence, read N- to C-terminus: Basic phospholipase A2 beta-bungarotoxin A1 chain (147 aa).

The N-terminal stretch at 1–19 is a signal peptide; sequence MNPAHLLVLSAVCVSLLGA. Positions 20–27 are excised as a propeptide; sequence ANIPPHPL. 6 cysteine pairs are disulfide-bonded: Cys-54–Cys-146, Cys-56–Cys-72, Cys-71–Cys-127, Cys-78–Cys-120, Cys-88–Cys-113, and Cys-106–Cys-118. Residues Tyr-55, Gly-57, and Gly-59 each contribute to the Ca(2+) site. Residue His-75 is part of the active site. Ca(2+) is bound at residue Asp-76. Asp-121 is an active-site residue.

This sequence belongs to the phospholipase A2 family. Group I subfamily. D49 sub-subfamily. As to quaternary structure, heterodimer; disulfide-linked. The A chains have phospholipase A2 activity and the B chains show homology with the basic protease inhibitors. The A1 chain is found in beta-1 and beta-2 bungarotoxins. The cofactor is Ca(2+). Expressed by the venom gland.

It is found in the secreted. The enzyme catalyses a 1,2-diacyl-sn-glycero-3-phosphocholine + H2O = a 1-acyl-sn-glycero-3-phosphocholine + a fatty acid + H(+). In terms of biological role, snake venom phospholipase A2 (PLA2) that inhibits neuromuscular transmission by blocking acetylcholine release from the nerve termini. PLA2 catalyzes the calcium-dependent hydrolysis of the 2-acyl groups in 3-sn-phosphoglycerides. The polypeptide is Basic phospholipase A2 beta-bungarotoxin A1 chain (Bungarus multicinctus (Many-banded krait)).